Reading from the N-terminus, the 510-residue chain is Nucleosome assembly protein 1-like 3 (510 aa).

Disordered stretches follow at residues 1 to 99 (MAEA…LGTN) and 161 to 311 (PTEE…KRED). A compositionally biased stretch (low complexity) spans 35 to 74 (SSSSSSSTSGSSSSSSTSGSSSSSGSGSSSSSSGSGSTSS). Residues 161 to 182 (PTEEECEWNSEDEEFSSDEEVQ) show a composition bias toward acidic residues. Composition is skewed to basic and acidic residues over residues 200–229 (PKEN…EVPK), 235–246 (KAEEKADSKDCM), and 254–300 (EDPK…VDLK).

The protein belongs to the nucleosome assembly protein (NAP) family.

The protein localises to the nucleus. In Pongo abelii (Sumatran orangutan), this protein is Nucleosome assembly protein 1-like 3 (NAP1L3).